An 816-amino-acid polypeptide reads, in one-letter code: Auxin response factor 12 (816 aa).

Residues 1–10 (MSSSSAASIG) are compositionally biased toward low complexity. Residues 1–24 (MSSSSAASIGPPQPPPPPAPPEEE) are disordered. Residues 11–20 (PPQPPPPPAP) are compositionally biased toward pro residues. A DNA-binding region (TF-B3) is located at residues 135 to 237 (FCKTLTASDT…QLLLGIRRAS (103 aa)). Residues 526-565 (NDQKQKIQPDQSYQVPTSAVLPSPTSLPSHLREKFGFSDP) form a disordered region. The 85-residue stretch at 717–801 (RTFVKVYKSG…WYIKILSPED (85 aa)) folds into the PB1 domain.

Belongs to the ARF family. As to quaternary structure, homodimers and heterodimers.

It is found in the nucleus. Its function is as follows. Auxin response factors (ARFs) are transcriptional factors that bind specifically to the DNA sequence 5'-TGTCTC-3' found in the auxin-responsive promoter elements (AuxREs). The sequence is that of Auxin response factor 12 (ARF12) from Oryza sativa subsp. indica (Rice).